The sequence spans 60 residues: Mastoparan-A (60 aa).

The signal sequence occupies residues 1-27 (MKNTILILFTAFIALLGFFGMSAEALA). AXPX repeat units follow at residues 27-30 (ADPI), 31-34 (ADPL), 35-38 (AGPN), and 41-43 (ADP). Positions 28–45 (DPIADPLAGPNAEADPEA) are excised as a propeptide. An Isoleucine amide modification is found at Ile59.

This sequence belongs to the MCD family. Mastoparan subfamily. Expressed by the venom gland.

The protein resides in the secreted. It is found in the target cell membrane. In terms of biological role, antimicrobial and mast cell degranulating peptide. Has broad spectrum antibacterial activity against both Gram-positive and Gram-negative bacteria (S.aureus MIC=32-64 ug/ml, S.xylosus MIC=2 ug/ml, S.alactolyticus MIC=12 ug/ml, C.koseri MIC=4 ug/ml, E.coli MIC=8 ug/ml, K.pneumoniae MIC=32 ug/ml, P.aerugiosa MIC=192 ug/ml, S.choleraesuis MIC=32 ug/ml, S.typhimurium MIC=32 ug/ml, V.parahamelytics MIC=16 ug/ml). Affects membrane permeability of E.coli. Shows hemolytic activities on sheep, chicken and human erythrocytes. Its mast cell degranulation activity may be related to the activation of G-protein coupled receptors in mast cells as well as interaction with other proteins located in cell endosomal membranes in the mast cells. The polypeptide is Mastoparan-A (Vespa analis (Yellow-vented hornet)).